Here is a 332-residue protein sequence, read N- to C-terminus: Beta-ketoacyl-[acyl-carrier-protein] synthase III 5 (332 aa).

Catalysis depends on residues Cys111 and His253. Positions 254–258 are ACP-binding; the sequence is QANAR. Asn283 is an active-site residue.

This sequence belongs to the thiolase-like superfamily. FabH family. In terms of assembly, homodimer.

The protein resides in the cytoplasm. The catalysed reaction is malonyl-[ACP] + acetyl-CoA + H(+) = 3-oxobutanoyl-[ACP] + CO2 + CoA. It participates in lipid metabolism; fatty acid biosynthesis. Functionally, catalyzes the condensation reaction of fatty acid synthesis by the addition to an acyl acceptor of two carbons from malonyl-ACP. Catalyzes the first condensation reaction which initiates fatty acid synthesis and may therefore play a role in governing the total rate of fatty acid production. Possesses both acetoacetyl-ACP synthase and acetyl transacylase activities. Its substrate specificity determines the biosynthesis of branched-chain and/or straight-chain of fatty acids. The chain is Beta-ketoacyl-[acyl-carrier-protein] synthase III 5 from Streptomyces coelicolor (strain ATCC BAA-471 / A3(2) / M145).